We begin with the raw amino-acid sequence, 692 residues long: Protein arginine N-methyltransferase 7 (692 aa).

SAM-dependent MTase PRMT-type domains follow at residues 14-359 (ENSW…YSLW) and 368-692 (AKTV…QEKR).

Belongs to the class I-like SAM-binding methyltransferase superfamily. Protein arginine N-methyltransferase family. PRMT7 subfamily.

Functionally, essential arginine methyltransferase that can both catalyze the formation of omega-N monomethylarginine (MMA) and symmetrical dimethylarginine (sDMA). Specifically mediates the symmetrical dimethylation of arginine residues in the small nuclear ribonucleoproteins SmD1 and SmD3. The sequence is that of Protein arginine N-methyltransferase 7 (Art7) from Drosophila pseudoobscura pseudoobscura (Fruit fly).